The primary structure comprises 182 residues: Small ribosomal subunit protein uS4c (182 aa).

One can recognise an S4 RNA-binding domain in the interval 82–143 (MRLDNILFRL…KQRSKALIQN (62 aa)).

This sequence belongs to the universal ribosomal protein uS4 family. In terms of assembly, part of the 30S ribosomal subunit. Contacts protein S5. The interaction surface between S4 and S5 is involved in control of translational fidelity.

It is found in the plastid. Its subcellular location is the chloroplast. Functionally, one of the primary rRNA binding proteins, it binds directly to 16S rRNA where it nucleates assembly of the body of the 30S subunit. Its function is as follows. With S5 and S12 plays an important role in translational accuracy. The polypeptide is Small ribosomal subunit protein uS4c (rps4) (Iris domestica (Leopard lily)).